The sequence spans 1610 residues: E3 ubiquitin-protein ligase listerin (1610 aa).

Residues 1–10 (MKKKSTDLYG) show a composition bias toward basic and acidic residues. A disordered region spans residues 1–20 (MKKKSTDLYGRKNPGMQSMS). HEAT repeat units lie at residues 110-148 (LKIFVFMSVLSSALQKKLAPWLKFYITPWVMGFFDSDRA), 314-351 (VPMLRLLSNMISNFPNEVHQFANDSKRPLSKLFSNLIT), 372-408 (IGAMQLVPSIESVDELCDAFLETANQEQRFLSTEVYD), 409-443 (CLLNFLSFVYTDSSDPQIKDHVRDRLRTIFTRYFK), 590-626 (SPAFTLLRDILLLLKDYADLSEPWENVANQFTVSFDE), 627-664 (LENIRVLNSLPSLFADGKLRGKISLVKTLVEYYDTAVF), 736-773 (KSLYSLLPVILFSKPEDDGHVAAHFESIFSLLKEKALE), 965-1003 (GKMPVLFKRFKNLSSAENTTSFSIFAAQGLTDFLIVVSN), 1119-1156 (CCFLRFMYYFLPTVFSLSGSYWNSIFDYIKYAMKMSVV), 1322-1354 (RVYLLVWDLIFYHFEETTYNIKLSIINQLHAMD), 1355-1393 (LLRPLLNTLVEILNLSYDRPINVDKYPKIDYNLMDYSSA), and 1435-1473 (FTGYNVSPLLISASLDDVERSIESEDFQSVGDVNVKVNR). The RING-type; atypical zinc finger occupies 1558 to 1604 (CAICYSVLSVERTLPNKRCGTCRHKFHASCLYKWFKSSNSSRCPLCR).

The protein belongs to the LTN1 family. As to quaternary structure, component of the ribosome quality control complex (RQC), composed of the E3 ubiquitin ligase rkr1/ltn1, rqc1 and mtr1/rqc2, as well as cdc48 and its ubiquitin-binding cofactors. RQC forms a stable complex with 60S ribosomal subunits.

The protein resides in the nucleus. It localises to the cytoplasm. It is found in the cytosol. It carries out the reaction S-ubiquitinyl-[E2 ubiquitin-conjugating enzyme]-L-cysteine + [acceptor protein]-L-lysine = [E2 ubiquitin-conjugating enzyme]-L-cysteine + N(6)-ubiquitinyl-[acceptor protein]-L-lysine.. It functions in the pathway protein modification; protein ubiquitination. In terms of biological role, E3 ubiquitin-protein ligase component of the ribosome quality control complex (RQC), a ribosome-associated complex that mediates ubiquitination and extraction of incompletely synthesized nascent chains for proteasomal degradation. Mediates ubiquitination of proteins derived from mRNAs lacking stop codons (non-stop proteins) and other translation arrest products induced by poly-lysine sequences and tandem rare codons. Ubiquitination leads to cdc48 recruitment for extraction and degradation of the incomplete translation product. May indirectly play a role in chromatin function and transcription. The sequence is that of E3 ubiquitin-protein ligase listerin from Schizosaccharomyces pombe (strain 972 / ATCC 24843) (Fission yeast).